Reading from the N-terminus, the 365-residue chain is Aminomethyltransferase (365 aa).

This sequence belongs to the GcvT family. As to quaternary structure, the glycine cleavage system is composed of four proteins: P, T, L and H.

The enzyme catalyses N(6)-[(R)-S(8)-aminomethyldihydrolipoyl]-L-lysyl-[protein] + (6S)-5,6,7,8-tetrahydrofolate = N(6)-[(R)-dihydrolipoyl]-L-lysyl-[protein] + (6R)-5,10-methylene-5,6,7,8-tetrahydrofolate + NH4(+). Functionally, the glycine cleavage system catalyzes the degradation of glycine. In Serratia proteamaculans (strain 568), this protein is Aminomethyltransferase.